A 302-amino-acid polypeptide reads, in one-letter code: Glutamyl-Q tRNA(Asp) synthetase (302 aa).

L-glutamate-binding positions include 13-17 and D49; that span reads RFAPS. The short motif at 16 to 26 is the 'HIGH' region element; sequence PSPTGPLHLGS. Zn(2+) contacts are provided by C105, C107, Y119, and C123. Y178 and R196 together coordinate L-glutamate. The 'KMSKS' region signature appears at 234-238; the sequence is KLSKQ. K237 is an ATP binding site.

It belongs to the class-I aminoacyl-tRNA synthetase family. GluQ subfamily. The cofactor is Zn(2+).

In terms of biological role, catalyzes the tRNA-independent activation of glutamate in presence of ATP and the subsequent transfer of glutamate onto a tRNA(Asp). Glutamate is transferred on the 2-amino-5-(4,5-dihydroxy-2-cyclopenten-1-yl) moiety of the queuosine in the wobble position of the QUC anticodon. In Methylococcus capsulatus (strain ATCC 33009 / NCIMB 11132 / Bath), this protein is Glutamyl-Q tRNA(Asp) synthetase.